The following is an 84-amino-acid chain: Putative membrane protein insertion efficiency factor (84 aa).

It belongs to the UPF0161 family.

Its subcellular location is the cell inner membrane. Its function is as follows. Could be involved in insertion of integral membrane proteins into the membrane. The polypeptide is Putative membrane protein insertion efficiency factor (Shewanella baltica (strain OS195)).